The primary structure comprises 270 residues: Peflin (270 aa).

The tract at residues 1–97 (MSYQYGQGYS…YRQQGSAGNV (97 aa)) is disordered. Tandem repeats lie at residues 22–30 (PPRAPYAGG), 44–54 (PPGQQYGGGSP), 62–70 (GPRAPYGGG), 72–81 (APGGPYGGYG), and 83–91 (PQGGPYRQQ). Residues 22–91 (PPRAPYAGGP…QPQGGPYRQQ (70 aa)) are 5 X 9 AA approximate tandem repeat of [AP]-P-G-G-P-Y-G-G-P-P. 2 stretches are compositionally biased toward low complexity: residues 26–47 (PYAG…PPGQ) and 55–66 (YGSYGQPGPRAP). Over residues 67-84 (YGGGQAPGGPYGGYGQPQ) the composition is skewed to gly residues. EF-hand domains follow at residues 100–135 (GVNP…FNNS), 141–169 (TCIM…WTFL), 170–202 (QQWR…MGYN), 203–239 (LSPQ…LQSM), and 240–269 (TQAF…ITRL). Residues aspartate 113, aspartate 115, serine 117, tyrosine 119, and glutamate 124 each coordinate Ca(2+). Ca(2+) is bound by residues aspartate 180, aspartate 182, serine 184, serine 186, and glutamate 191.

In terms of assembly, heterodimer; heterodimerizes (via the EF-hand 5) with pdcd6.

Its subcellular location is the cytoplasm. It localises to the endoplasmic reticulum. It is found in the membrane. The protein localises to the cytoplasmic vesicle. The protein resides in the COPII-coated vesicle membrane. Its function is as follows. Calcium-binding protein that acts as an adapter that bridges unrelated proteins or stabilizes weak protein-protein complexes in response to calcium. Acts as a negative regulator of ER-Golgi transport. The sequence is that of Peflin from Danio rerio (Zebrafish).